The primary structure comprises 596 residues: Germinal center kinase 3 (596 aa).

A compositionally biased stretch (low complexity) spans 1–54 (MSSSNLAGNTNTTTTSSAASAAAAHSAANASTITSEYSTTQTTTGTFNTDTLSS). A disordered region spans residues 1 to 80 (MSSSNLAGNT…PPPPPQVSSP (80 aa)). Residues Thr-13 and Thr-32 each carry the phosphothreonine; by autocatalysis modification. Pro residues predominate over residues 67–77 (SQPPPPPPPQV). The Protein kinase domain occupies 108–386 (YKLDESIGVG…ASELLKYSFF (279 aa)). ATP-binding positions include 114–122 (IGVGATATV) and Lys-137. Ser-190 bears the Phosphoserine; by autocatalysis mark. Catalysis depends on Asp-240, which acts as the Proton acceptor. Thr-280 is modified (phosphothreonine). Ser-405 carries the post-translational modification Phosphoserine; by autocatalysis. A Phosphoserine modification is found at Ser-419. The segment at 429–496 (NWEFEYDSPQ…EGGGATTPCP (68 aa)) is disordered. Acidic residues predominate over residues 432–450 (FEYDSPQESDDDSDLEDEE). A compositionally biased stretch (gly residues) spans 466 to 479 (GAAGAAGGATGGAA).

Belongs to the protein kinase superfamily. STE Ser/Thr protein kinase family. STE20 subfamily. In terms of assembly, interacts (via C-terminus) with clh-3; required for the phosphorylation-mediated inhibition of clh-3 function. Interacts (via C-terminus) with wnk-1; the interaction is direct. Phosphorylated at Thr-280 and Ser-419 probably by wnk-1; phosphorylation results in weak activation. Predominantly autophosphorylated at Thr-32 and Ser-190 and weakly autophosphorylated at Thr-13 and Ser-405 in vitro. Ubiquitously expressed with a higher expression in the excretory cell. Expressed in both male and female germ cells; up-regulated in maturing spermatocytes but absent in mature sperm.

It localises to the cytoplasm. It is found in the nucleus. It catalyses the reaction L-seryl-[protein] + ATP = O-phospho-L-seryl-[protein] + ADP + H(+). The catalysed reaction is L-threonyl-[protein] + ATP = O-phospho-L-threonyl-[protein] + ADP + H(+). Its function is as follows. Plays a role in osmotic stress responses by regulating ion homeostasis and by controlling cell volume via the phosphorylation-mediated inhibition of the chloride channel clh-3. In addition, increases gpdh-1 translation upon osmotic stress, likely downstream of wnk-1. Involved in several developmental processes including the tubular formation of the excretory canals, the formation of the intestine and the progression through larval stages. In addition, required for germ line development by controlling meiosis and chromosomal segregation during spermatogenesis. By controlling clh-3 activity, may regulate the development of the excretory canals and fertility. The chain is Germinal center kinase 3 from Caenorhabditis elegans.